The primary structure comprises 432 residues: Glial fibrillary acidic protein (432 aa).

Positions 1–72 are head; it reads MERRRITSAA…KETRASERAE (72 aa). The residue at position 7 (Thr7) is a Phosphothreonine; by AURKB and ROCK1. Arg12 bears the Omega-N-methylarginine mark. The residue at position 13 (Ser13) is a Phosphoserine; by AURKB and ROCK1. Citrulline is present on residues Arg30 and Arg36. Ser38 is subject to Phosphoserine; by AURKB and ROCK1. Positions 69 to 377 constitute an IF rod domain; it reads ERAEMMELND…KLLEGEENRI (309 aa). The coil 1A stretch occupies residues 73–104; sequence MMELNDRFASYIEKVRFLEQQNKALAAELNQL. Ser82 carries the phosphoserine modification. The tract at residues 105–115 is linker 1; it reads RAKEPTKLADV. Phosphothreonine occurs at positions 110 and 150. A coil 1B region spans residues 116 to 214; that stretch reads YQAELRELRL…EEEVRELQEQ (99 aa). The interval 215 to 230 is linker 12; the sequence is LARQQVHVELDMAKPD. Residues 231–252 form a coil 2A region; sequence LTAALKEIRTQYEAMASSNMHE. Residues 253–256 are linker 2; sequence AEEW. The segment at 257-377 is coil 2B; it reads YRSKFADLTD…KLLEGEENRI (121 aa). Residue Arg270 is modified to Citrulline. A Phosphoserine modification is found at Ser323. The tail stretch occupies residues 378–432; it reads TIPVQTFSNLQIRETSLDTKSVSEGHLKRNIVVKTVEMRDGEVIKESKQEHKDVM. Thr383 bears the Phosphothreonine mark. Position 385 is a phosphoserine (Ser385). A citrulline mark is found at Arg406 and Arg416.

This sequence belongs to the intermediate filament family. In terms of assembly, interacts with SYNM. Phosphorylated by PKN1.

It localises to the cytoplasm. Its function is as follows. GFAP, a class-III intermediate filament, is a cell-specific marker that, during the development of the central nervous system, distinguishes astrocytes from other glial cells. This chain is Glial fibrillary acidic protein (GFAP), found in Pongo abelii (Sumatran orangutan).